The following is a 449-amino-acid chain: MKSYEVNFDGLVGPTHNYGGLSYGNVASQSNSQQASNPREAARQGLAKMKALADMGFKQGVLAPQERPDVAALRRLGFSGSDAEVIQRAAREAMPLLVASCSASSMWVANAATVSPSADTADGRVHFTAANLNCKYHRSIEHPTTSRVLGAMFNDEKYFAHHAALPAVAQFGDEGAANHTRFCRAYGEAGVEFFVYGRSAFDSRYPAPQKYPARQTLEASQAVARLHGLSDDGVVYAQQNPAVIDQGVFHNDVISVGNGEVLFYHEDAFLETDAVLGQLRAKLASKGGNFQAICVPRAAVAVEDAVRSYLFNSQLLSREDGSMLLVVPEECRNNERVWAYLGQLTSQGGPVKEVKVFDLKQSMQNGGGPACLRLRVALKEAELAAVNQGVIMTATLYDTLLQWVDRHYRDRLGEADLADPQLLVECRTALDELTQILKLGSVYPFQRQP.

Substrate-binding positions include 19 to 28 (GGLSYGNVAS), N110, and 137 to 138 (HR). Positions 23–43 (YGNVASQSNSQQASNPREAAR) are disordered. Over residues 27 to 37 (ASQSNSQQASN) the composition is skewed to low complexity. Residue E174 is part of the active site. R214 lines the substrate pocket. H250 is a catalytic residue. 2 residues coordinate substrate: D252 and N365. The active-site Nucleophile is the C371.

This sequence belongs to the succinylarginine dihydrolase family. In terms of assembly, homodimer.

It carries out the reaction N(2)-succinyl-L-arginine + 2 H2O + 2 H(+) = N(2)-succinyl-L-ornithine + 2 NH4(+) + CO2. It functions in the pathway amino-acid degradation; L-arginine degradation via AST pathway; L-glutamate and succinate from L-arginine: step 2/5. Its function is as follows. Catalyzes the hydrolysis of N(2)-succinylarginine into N(2)-succinylornithine, ammonia and CO(2). This chain is N-succinylarginine dihydrolase, found in Pseudomonas putida (strain ATCC 47054 / DSM 6125 / CFBP 8728 / NCIMB 11950 / KT2440).